Consider the following 322-residue polypeptide: Corticotropin-releasing factor-binding protein (322 aa).

Residues 1-24 (MSPNFKLQCHFTLILLTALRGESR) form the signal peptide. Disulfide bonds link Cys60–Cys81, Cys104–Cys141, Cys183–Cys205, Cys237–Cys264, and Cys277–Cys318. Asn204 carries an N-linked (GlcNAc...) asparagine glycan.

The protein belongs to the CRF-binding protein family.

The protein localises to the secreted. In terms of biological role, binds CRF and inactivates it. May prevent inappropriate pituitary-adrenal stimulation in pregnancy. In Rattus norvegicus (Rat), this protein is Corticotropin-releasing factor-binding protein (Crhbp).